Here is a 311-residue protein sequence, read N- to C-terminus: Aldose reductase B (311 aa).

13 to 23 provides a ligand contact to NADP(+); the sequence is DIHHIPMIGLG. Y54 acts as the Proton donor in catalysis. H116 is a substrate binding site. NADP(+) is bound at residue 219–273; sequence SPLGQGKCDLLSNETLKSIADKHNKTVANVIFKWLNQRGIVTIPKSSNPARIIEN.

The protein belongs to the aldo/keto reductase family.

It carries out the reaction an alditol + NAD(+) = an aldose + NADH + H(+). The enzyme catalyses an alditol + NADP(+) = an aldose + NADPH + H(+). In terms of biological role, catalyzes the NADPH-dependent reduction of a wide variety of carbonyl-containing compounds to their corresponding alcohols with a broad range of catalytic efficiencies. In Dictyostelium discoideum (Social amoeba), this protein is Aldose reductase B (alrB).